A 334-amino-acid polypeptide reads, in one-letter code: Protein-methionine-sulfoxide reductase catalytic subunit MsrP (334 aa).

Positions 1–44 (MKAVNPLTENDVTPESLFNARRRTVLKMLGMSAAALSLPGAARA) form a signal peptide, tat-type signal. Mo-molybdopterin contacts are provided by residues N88, 91 to 92 (YE), C146, T181, N233, R238, and 249 to 251 (GIK).

The protein belongs to the MsrP family. In terms of assembly, heterodimer of a catalytic subunit (MsrP) and a heme-binding subunit (MsrQ). Requires Mo-molybdopterin as cofactor. In terms of processing, predicted to be exported by the Tat system. The position of the signal peptide cleavage has not been experimentally proven.

The protein localises to the periplasm. The catalysed reaction is L-methionyl-[protein] + a quinone + H2O = L-methionyl-(S)-S-oxide-[protein] + a quinol. It catalyses the reaction L-methionyl-[protein] + a quinone + H2O = L-methionyl-(R)-S-oxide-[protein] + a quinol. Part of the MsrPQ system that repairs oxidized periplasmic proteins containing methionine sulfoxide residues (Met-O), using respiratory chain electrons. Thus protects these proteins from oxidative-stress damage caused by reactive species of oxygen and chlorine generated by the host defense mechanisms. MsrPQ is essential for the maintenance of envelope integrity under bleach stress, rescuing a wide series of structurally unrelated periplasmic proteins from methionine oxidation. The catalytic subunit MsrP is non-stereospecific, being able to reduce both (R-) and (S-) diastereoisomers of methionine sulfoxide. This is Protein-methionine-sulfoxide reductase catalytic subunit MsrP from Erwinia tasmaniensis (strain DSM 17950 / CFBP 7177 / CIP 109463 / NCPPB 4357 / Et1/99).